The sequence spans 963 residues: Glycine dehydrogenase (decarboxylating) (963 aa).

Position 710 is an N6-(pyridoxal phosphate)lysine (lysine 710).

The protein belongs to the GcvP family. The glycine cleavage system is composed of four proteins: P, T, L and H. The cofactor is pyridoxal 5'-phosphate.

It carries out the reaction N(6)-[(R)-lipoyl]-L-lysyl-[glycine-cleavage complex H protein] + glycine + H(+) = N(6)-[(R)-S(8)-aminomethyldihydrolipoyl]-L-lysyl-[glycine-cleavage complex H protein] + CO2. In terms of biological role, the glycine cleavage system catalyzes the degradation of glycine. The P protein binds the alpha-amino group of glycine through its pyridoxal phosphate cofactor; CO(2) is released and the remaining methylamine moiety is then transferred to the lipoamide cofactor of the H protein. The chain is Glycine dehydrogenase (decarboxylating) from Pseudoalteromonas translucida (strain TAC 125).